The primary structure comprises 600 residues: Kelch-like protein 24 (600 aa).

One can recognise a BTB domain in the interval 66–133 (TDVIICVEGK…VYTGKVKITT (68 aa)). A BACK domain is found at 168 to 270 (CLGIQRFADT…HPNYFVQTVE (103 aa)). Kelch repeat units follow at residues 314–363 (VIVV…ALRN), 365–407 (ILVS…VLLG), 408–454 (KVYV…SCVG), 456–502 (LFVI…SLNN), 504–544 (IYVA…VCNG), and 546–592 (IYIL…TIHR).

In terms of assembly, forms homodimers. Interacts with GRIK2. Component of the BCR(KLHL24) E3 ubiquitin ligase complex, composed of CUL3, RBX1 and KLHL24. Interacts with CUL3. Interacts with KRT14. Autoubiquitinated. Autoubiquitination leads to proteasomal degradation and is necessary to control KLHL24 levels. Expressed in the skin. Found in keratinocytes, dermal fibroblasts, and melanocytes. Basal-layer keratinocytes have lower KLHL24 expression than suprabasal keratinocytes. Expressed in the brain, spinal cord, liver, testis, heart and at higher levels in the skeletal muscle.

It is found in the perikaryon. The protein localises to the cell projection. It localises to the axon. The protein resides in the cytoplasm. Its subcellular location is the cell junction. It is found in the desmosome. The protein localises to the adherens junction. Necessary to maintain the balance between intermediate filament stability and degradation, a process that is essential for skin integrity. As part of the BCR(KLHL24) E3 ubiquitin ligase complex, mediates ubiquitination of KRT14 and controls its levels during keratinocytes differentiation. Specifically reduces kainate receptor-mediated currents in hippocampal neurons, most probably by modulating channel properties. Has a crucial role in cardiac development and function. The protein is Kelch-like protein 24 (KLHL24) of Homo sapiens (Human).